The primary structure comprises 42 residues: Omega-theraphotoxin-Asp3a (42 aa).

3 disulfide bridges follow: Cys1–Cys16, Cys8–Cys21, and Cys15–Cys30.

This sequence belongs to the neurotoxin 14 (magi-1) family. 08 (Ltx-4) subfamily. As to expression, expressed by the venom gland.

It localises to the secreted. Inhibits voltage-gated calcium channels (Cav) in rat cerebellar granule cells. This Aphonopelma sp. (American tarantula) protein is Omega-theraphotoxin-Asp3a.